A 292-amino-acid chain; its full sequence is Phosphoribulokinase, chromosomal (292 aa).

12-20 (GSSGAGTTS) lines the ATP pocket.

It belongs to the phosphoribulokinase family. In terms of assembly, homooctamer.

The enzyme catalyses D-ribulose 5-phosphate + ATP = D-ribulose 1,5-bisphosphate + ADP + H(+). The protein operates within carbohydrate biosynthesis; Calvin cycle. The sequence is that of Phosphoribulokinase, chromosomal (cfxP) from Cupriavidus necator (strain ATCC 17699 / DSM 428 / KCTC 22496 / NCIMB 10442 / H16 / Stanier 337) (Ralstonia eutropha).